Consider the following 126-residue polypeptide: MSVPAELGYTKEHEWVAINEGIATVGITAFAAEALGDIVYVEPPEVGSTVTAGESCGEIESHKSVSELYSPVDGEVVDVNQAAVDDPELIGSDPYGRGWLFKVELAEEPADLLTPEQYTQLTEGEG.

In terms of domain architecture, Lipoyl-binding spans 22-104 (IATVGITAFA…YGRGWLFKVE (83 aa)). N6-lipoyllysine is present on K63.

The protein belongs to the GcvH family. The glycine cleavage system is composed of four proteins: P, T, L and H. (R)-lipoate serves as cofactor.

Its function is as follows. The glycine cleavage system catalyzes the degradation of glycine. The H protein shuttles the methylamine group of glycine from the P protein to the T protein. This is Glycine cleavage system H protein from Thermobifida fusca (strain YX).